The chain runs to 164 residues: Thioredoxin domain-containing protein R443 (164 aa).

A helical membrane pass occupies residues 8–28; it reads HIVLIVLAIILILWIISLLLC. Residues 36-163 enclose the Thioredoxin domain; that stretch reads YQVPIIQPMQ…LTQFIRSNMN (128 aa). Residues cysteine 84 and cysteine 87 are joined by a disulfide bond.

Belongs to the thioredoxin family.

It is found in the host membrane. Its subcellular location is the virion. The protein is Thioredoxin domain-containing protein R443 of Acanthamoeba polyphaga mimivirus (APMV).